The chain runs to 308 residues: tRNA pseudouridine synthase B (308 aa).

Asp44 serves as the catalytic Nucleophile.

It belongs to the pseudouridine synthase TruB family. Type 1 subfamily.

It carries out the reaction uridine(55) in tRNA = pseudouridine(55) in tRNA. In terms of biological role, responsible for synthesis of pseudouridine from uracil-55 in the psi GC loop of transfer RNAs. The protein is tRNA pseudouridine synthase B of Nitratidesulfovibrio vulgaris (strain DSM 19637 / Miyazaki F) (Desulfovibrio vulgaris).